A 94-amino-acid chain; its full sequence is Integration host factor subunit beta (94 aa).

This sequence belongs to the bacterial histone-like protein family. As to quaternary structure, heterodimer of an alpha and a beta chain.

Functionally, this protein is one of the two subunits of integration host factor, a specific DNA-binding protein that functions in genetic recombination as well as in transcriptional and translational control. This chain is Integration host factor subunit beta (ihfB), found in Haemophilus influenzae (strain ATCC 51907 / DSM 11121 / KW20 / Rd).